The following is a 410-amino-acid chain: S-adenosylmethionine synthase (410 aa).

Residue H15 coordinates ATP. D17 serves as a coordination point for Mg(2+). E43 contributes to the K(+) binding site. 2 residues coordinate L-methionine: E56 and Q100. The interval 100 to 110 (QSPDIAKGVDT) is flexible loop. Residues 171 to 173 (DGK), 248 to 249 (KF), D257, 263 to 264 (RK), A280, and K284 contribute to the ATP site. D257 is an L-methionine binding site. Position 288 (K288) interacts with L-methionine.

The protein belongs to the AdoMet synthase family. In terms of assembly, homotetramer; dimer of dimers. Mg(2+) serves as cofactor. Requires K(+) as cofactor.

It is found in the cytoplasm. The catalysed reaction is L-methionine + ATP + H2O = S-adenosyl-L-methionine + phosphate + diphosphate. Its pathway is amino-acid biosynthesis; S-adenosyl-L-methionine biosynthesis; S-adenosyl-L-methionine from L-methionine: step 1/1. Functionally, catalyzes the formation of S-adenosylmethionine (AdoMet) from methionine and ATP. The overall synthetic reaction is composed of two sequential steps, AdoMet formation and the subsequent tripolyphosphate hydrolysis which occurs prior to release of AdoMet from the enzyme. This chain is S-adenosylmethionine synthase, found in Prochlorococcus marinus (strain MIT 9211).